Here is a 60-residue protein sequence, read N- to C-terminus: Small ribosomal subunit protein eS31 (60 aa).

Cys-24, Cys-27, Cys-42, and Cys-45 together coordinate Zn(2+). The C4-type zinc-finger motif lies at 24-45 (CPRCGPGVFMADHGNRYACGRC).

This sequence belongs to the eukaryotic ribosomal protein eS31 family. As to quaternary structure, part of the 30S ribosomal subunit. Zn(2+) serves as cofactor.

In Methanopyrus kandleri (strain AV19 / DSM 6324 / JCM 9639 / NBRC 100938), this protein is Small ribosomal subunit protein eS31.